The primary structure comprises 102 residues: Heat shock protein HspQ (102 aa).

Belongs to the HspQ family.

The protein resides in the cytoplasm. Functionally, involved in the degradation of certain denaturated proteins, including DnaA, during heat shock stress. The polypeptide is Heat shock protein HspQ (Pectobacterium atrosepticum (strain SCRI 1043 / ATCC BAA-672) (Erwinia carotovora subsp. atroseptica)).